The primary structure comprises 86 residues: Small ribosomal subunit protein uS15 (86 aa).

Positions 1–22 (MSIDTQKVIEDNKRSSADTGSP) are disordered. The segment covering 7–16 (KVIEDNKRSS) has biased composition (basic and acidic residues).

This sequence belongs to the universal ribosomal protein uS15 family. As to quaternary structure, part of the 30S ribosomal subunit. Forms a bridge to the 50S subunit in the 70S ribosome, contacting the 23S rRNA.

In terms of biological role, one of the primary rRNA binding proteins, it binds directly to 16S rRNA where it helps nucleate assembly of the platform of the 30S subunit by binding and bridging several RNA helices of the 16S rRNA. Forms an intersubunit bridge (bridge B4) with the 23S rRNA of the 50S subunit in the ribosome. The protein is Small ribosomal subunit protein uS15 of Stenotrophomonas maltophilia (strain R551-3).